Here is a 238-residue protein sequence, read N- to C-terminus: 7-cyano-7-deazaguanine synthase (238 aa).

14–24 (FSGGQDSATCL) contacts ATP. The Zn(2+) site is built by Cys202, Cys217, Cys220, and Cys223.

Belongs to the QueC family. Requires Zn(2+) as cofactor.

The enzyme catalyses 7-carboxy-7-deazaguanine + NH4(+) + ATP = 7-cyano-7-deazaguanine + ADP + phosphate + H2O + H(+). It participates in purine metabolism; 7-cyano-7-deazaguanine biosynthesis. Functionally, catalyzes the ATP-dependent conversion of 7-carboxy-7-deazaguanine (CDG) to 7-cyano-7-deazaguanine (preQ(0)). The sequence is that of 7-cyano-7-deazaguanine synthase from Nitrobacter winogradskyi (strain ATCC 25391 / DSM 10237 / CIP 104748 / NCIMB 11846 / Nb-255).